The following is a 468-amino-acid chain: Flagellar hook-associated protein 2 (468 aa).

The stretch at 411–439 (VSKTLNKLTKDYNAASDRIDAQVARYKEQ) forms a coiled coil.

This sequence belongs to the FliD family. In terms of assembly, homopentamer.

It is found in the secreted. The protein resides in the bacterial flagellum. Required for the morphogenesis and for the elongation of the flagellar filament by facilitating polymerization of the flagellin monomers at the tip of growing filament. Forms a capping structure, which prevents flagellin subunits (transported through the central channel of the flagellum) from leaking out without polymerization at the distal end. The polypeptide is Flagellar hook-associated protein 2 (fliD) (Escherichia coli (strain K12)).